A 692-amino-acid polypeptide reads, in one-letter code: Paramyosin (692 aa).

The tract at residues 1–15 (MNKKRDSELAKLRKL) is nonhelical region. Residues 16-692 (LEDVHIESEE…DHRVKELLLQ (677 aa)) adopt a coiled-coil conformation. The tract at residues 26 to 57 (TAHHLRQKHQAAIQEMQDQLDQLQKAKNKSDK) is disordered.

It belongs to the paramyosin family. As to quaternary structure, homodimer.

It is found in the cytoplasm. The protein resides in the myofibril. Functionally, paramyosin is a major structural component of many thick filaments isolated from invertebrate muscles. The sequence is that of Paramyosin from Dermatophagoides farinae (American house dust mite).